We begin with the raw amino-acid sequence, 616 residues long: Dihydroxy-acid dehydratase (616 aa).

Asp81 contacts Mg(2+). Cys122 serves as a coordination point for [2Fe-2S] cluster. Residues Asp123 and Lys124 each coordinate Mg(2+). At Lys124 the chain carries N6-carboxylysine. Residue Cys195 coordinates [2Fe-2S] cluster. A Mg(2+)-binding site is contributed by Glu491. Ser517 serves as the catalytic Proton acceptor.

Belongs to the IlvD/Edd family. In terms of assembly, homodimer. It depends on [2Fe-2S] cluster as a cofactor. The cofactor is Mg(2+).

It catalyses the reaction (2R)-2,3-dihydroxy-3-methylbutanoate = 3-methyl-2-oxobutanoate + H2O. It carries out the reaction (2R,3R)-2,3-dihydroxy-3-methylpentanoate = (S)-3-methyl-2-oxopentanoate + H2O. The protein operates within amino-acid biosynthesis; L-isoleucine biosynthesis; L-isoleucine from 2-oxobutanoate: step 3/4. It participates in amino-acid biosynthesis; L-valine biosynthesis; L-valine from pyruvate: step 3/4. Its function is as follows. Functions in the biosynthesis of branched-chain amino acids. Catalyzes the dehydration of (2R,3R)-2,3-dihydroxy-3-methylpentanoate (2,3-dihydroxy-3-methylvalerate) into 2-oxo-3-methylpentanoate (2-oxo-3-methylvalerate) and of (2R)-2,3-dihydroxy-3-methylbutanoate (2,3-dihydroxyisovalerate) into 2-oxo-3-methylbutanoate (2-oxoisovalerate), the penultimate precursor to L-isoleucine and L-valine, respectively. In Klebsiella pneumoniae (strain 342), this protein is Dihydroxy-acid dehydratase.